Here is a 238-residue protein sequence, read N- to C-terminus: tRNA (guanine-N(7)-)-methyltransferase (238 aa).

4 residues coordinate S-adenosyl-L-methionine: glutamate 70, aspartate 95, aspartate 122, and aspartate 145. Aspartate 145 is a catalytic residue. Substrate contacts are provided by residues lysine 149, aspartate 181, and 216-219 (TKFE).

The protein belongs to the class I-like SAM-binding methyltransferase superfamily. TrmB family.

The enzyme catalyses guanosine(46) in tRNA + S-adenosyl-L-methionine = N(7)-methylguanosine(46) in tRNA + S-adenosyl-L-homocysteine. It functions in the pathway tRNA modification; N(7)-methylguanine-tRNA biosynthesis. Functionally, catalyzes the formation of N(7)-methylguanine at position 46 (m7G46) in tRNA. This Neisseria gonorrhoeae (strain ATCC 700825 / FA 1090) protein is tRNA (guanine-N(7)-)-methyltransferase.